The chain runs to 182 residues: Inosine/xanthosine triphosphatase (182 aa).

Residues Asp-38 and Glu-68 each coordinate Mg(2+). Residue 68–69 participates in substrate binding; it reads EA.

Belongs to the YjjX NTPase family. As to quaternary structure, homodimer. Requires Mg(2+) as cofactor. Mn(2+) serves as cofactor.

It catalyses the reaction XTP + H2O = XDP + phosphate + H(+). It carries out the reaction ITP + H2O = IDP + phosphate + H(+). Its function is as follows. Phosphatase that hydrolyzes non-canonical purine nucleotides such as XTP and ITP to their respective diphosphate derivatives. Probably excludes non-canonical purines from DNA/RNA precursor pool, thus preventing their incorporation into DNA/RNA and avoiding chromosomal lesions. This Erwinia tasmaniensis (strain DSM 17950 / CFBP 7177 / CIP 109463 / NCPPB 4357 / Et1/99) protein is Inosine/xanthosine triphosphatase.